A 397-amino-acid chain; its full sequence is Diphosphomevalonate decarboxylase (397 aa).

(R)-5-diphosphomevalonate contacts are provided by residues 19 to 22 (YWGK), arginine 74, 153 to 158 (SGSACR), and threonine 209. Residues 378–397 (GPGPQDTKSSLIDPETGLPR) form a disordered region.

This sequence belongs to the diphosphomevalonate decarboxylase family. In terms of assembly, homodimer.

It catalyses the reaction (R)-5-diphosphomevalonate + ATP = isopentenyl diphosphate + ADP + phosphate + CO2. Its pathway is isoprenoid biosynthesis; isopentenyl diphosphate biosynthesis via mevalonate pathway; isopentenyl diphosphate from (R)-mevalonate: step 3/3. Diphosphomevalonate decarboxylase; part of the second module of ergosterol biosynthesis pathway that includes the middle steps of the pathway. The second module is carried out in the vacuole and involves the formation of farnesyl diphosphate, which is also an important intermediate in the biosynthesis of ubiquinone, dolichol, heme and prenylated proteins. Activity by the mevalonate kinase ERG12 first converts mevalonate into 5-phosphomevalonate. 5-phosphomevalonate is then further converted to 5-diphosphomevalonate by the phosphomevalonate kinase ERG8. The diphosphomevalonate decarboxylase MVD1/ERG19 then produces isopentenyl diphosphate. The isopentenyl-diphosphate delta-isomerase IDI1 then catalyzes the 1,3-allylic rearrangement of the homoallylic substrate isopentenyl (IPP) to its highly electrophilic allylic isomer, dimethylallyl diphosphate (DMAPP). Finally the farnesyl diphosphate synthase ERG20 catalyzes the sequential condensation of isopentenyl pyrophosphate with dimethylallyl pyrophosphate, and then with the resultant geranylpyrophosphate to the ultimate product farnesyl pyrophosphate. The protein is Diphosphomevalonate decarboxylase of Eremothecium gossypii (strain ATCC 10895 / CBS 109.51 / FGSC 9923 / NRRL Y-1056) (Yeast).